We begin with the raw amino-acid sequence, 277 residues long: Undecaprenyl-diphosphatase (277 aa).

6 helical membrane-spanning segments follow: residues 47–67 (FNII…RGKI), 85–105 (ANLL…ADLI), 108–128 (WLFN…VMLW), 183–203 (AATE…AVYS), 218–238 (VFAV…RALL), and 249–269 (FAWY…FHLI).

It belongs to the UppP family.

It localises to the cell inner membrane. The catalysed reaction is di-trans,octa-cis-undecaprenyl diphosphate + H2O = di-trans,octa-cis-undecaprenyl phosphate + phosphate + H(+). Catalyzes the dephosphorylation of undecaprenyl diphosphate (UPP). Confers resistance to bacitracin. This chain is Undecaprenyl-diphosphatase, found in Pseudomonas aeruginosa (strain UCBPP-PA14).